The following is a 498-amino-acid chain: Probable cytosol aminopeptidase (498 aa).

Mn(2+) is bound by residues lysine 264 and aspartate 269. The active site involves lysine 276. Positions 287, 346, and 348 each coordinate Mn(2+). Arginine 350 is a catalytic residue.

It belongs to the peptidase M17 family. Requires Mn(2+) as cofactor.

It localises to the cytoplasm. The catalysed reaction is Release of an N-terminal amino acid, Xaa-|-Yaa-, in which Xaa is preferably Leu, but may be other amino acids including Pro although not Arg or Lys, and Yaa may be Pro. Amino acid amides and methyl esters are also readily hydrolyzed, but rates on arylamides are exceedingly low.. It carries out the reaction Release of an N-terminal amino acid, preferentially leucine, but not glutamic or aspartic acids.. Its function is as follows. Presumably involved in the processing and regular turnover of intracellular proteins. Catalyzes the removal of unsubstituted N-terminal amino acids from various peptides. In Rhizobium rhizogenes (strain K84 / ATCC BAA-868) (Agrobacterium radiobacter), this protein is Probable cytosol aminopeptidase.